The sequence spans 448 residues: Phosphoglucosamine mutase (448 aa).

Residue Ser102 is the Phosphoserine intermediate of the active site. Ser102, Asp241, Asp243, and Asp245 together coordinate Mg(2+). Phosphoserine is present on Ser102.

It belongs to the phosphohexose mutase family. Mg(2+) is required as a cofactor. Post-translationally, activated by phosphorylation.

The catalysed reaction is alpha-D-glucosamine 1-phosphate = D-glucosamine 6-phosphate. Catalyzes the conversion of glucosamine-6-phosphate to glucosamine-1-phosphate. This is Phosphoglucosamine mutase from Ruegeria pomeroyi (strain ATCC 700808 / DSM 15171 / DSS-3) (Silicibacter pomeroyi).